The sequence spans 27 residues: Caerulein precursor fragment R7 (27 aa).

Expressed by the skin glands.

It is found in the secreted. Functionally, antimicrobial peptide. In Xenopus ruwenzoriensis (Uganda clawed frog), this protein is Caerulein precursor fragment R7.